The sequence spans 172 residues: Protein-export protein SecB (172 aa).

Belongs to the SecB family. Homotetramer, a dimer of dimers. One homotetramer interacts with 1 SecA dimer.

The protein localises to the cytoplasm. One of the proteins required for the normal export of preproteins out of the cell cytoplasm. It is a molecular chaperone that binds to a subset of precursor proteins, maintaining them in a translocation-competent state. It also specifically binds to its receptor SecA. This Xylella fastidiosa (strain 9a5c) protein is Protein-export protein SecB.